The chain runs to 128 residues: Small ribosomal subunit protein uS11 (128 aa).

It belongs to the universal ribosomal protein uS11 family. As to quaternary structure, part of the 30S ribosomal subunit. Interacts with proteins S7 and S18. Binds to IF-3.

Functionally, located on the platform of the 30S subunit, it bridges several disparate RNA helices of the 16S rRNA. Forms part of the Shine-Dalgarno cleft in the 70S ribosome. The polypeptide is Small ribosomal subunit protein uS11 (Synechococcus sp. (strain JA-2-3B'a(2-13)) (Cyanobacteria bacterium Yellowstone B-Prime)).